The primary structure comprises 475 residues: Ribulose bisphosphate carboxylase large chain (475 aa).

Residues 1 to 2 constitute a propeptide that is removed on maturation; sequence MA. Proline 3 is modified (N-acetylproline). Residues asparagine 123 and threonine 173 each contribute to the substrate site. Lysine 175 serves as the catalytic Proton acceptor. A substrate-binding site is contributed by lysine 177. Lysine 201, aspartate 203, and glutamate 204 together coordinate Mg(2+). Lysine 201 carries the post-translational modification N6-carboxylysine. Histidine 294 serves as the catalytic Proton acceptor. The substrate site is built by arginine 295, histidine 327, and serine 379.

The protein belongs to the RuBisCO large chain family. Type I subfamily. In terms of assembly, heterohexadecamer of 8 large chains and 8 small chains. Mg(2+) is required as a cofactor.

The protein localises to the plastid. It localises to the chloroplast. It catalyses the reaction 2 (2R)-3-phosphoglycerate + 2 H(+) = D-ribulose 1,5-bisphosphate + CO2 + H2O. It carries out the reaction D-ribulose 1,5-bisphosphate + O2 = 2-phosphoglycolate + (2R)-3-phosphoglycerate + 2 H(+). RuBisCO catalyzes two reactions: the carboxylation of D-ribulose 1,5-bisphosphate, the primary event in carbon dioxide fixation, as well as the oxidative fragmentation of the pentose substrate in the photorespiration process. Both reactions occur simultaneously and in competition at the same active site. This Ostreococcus tauri protein is Ribulose bisphosphate carboxylase large chain.